We begin with the raw amino-acid sequence, 529 residues long: uncharacterized protein (529 aa).

Positions 26-58 (CDSCRKQKTRCLAGSVEDENRACLRCRSLNMDC) form a DNA-binding region, zn(2)-C6 fungal-type.

The protein resides in the nucleus. This is an uncharacterized protein from Schizosaccharomyces pombe (strain 972 / ATCC 24843) (Fission yeast).